The following is a 394-amino-acid chain: L-lactate dehydrogenase (394 aa).

Positions 1-380 constitute an FMN hydroxy acid dehydrogenase domain; that stretch reads MIISAASDYR…SRDSLVQNAE (380 aa). Tyrosine 24 contributes to the substrate binding site. Serine 106 and glutamine 127 together coordinate FMN. Tyrosine 129 is a substrate binding site. Position 155 (threonine 155) interacts with FMN. Arginine 164 is a binding site for substrate. Lysine 251 serves as a coordination point for FMN. Catalysis depends on histidine 275, which acts as the Proton acceptor. Arginine 278 is a binding site for substrate. An FMN-binding site is contributed by 306-330; the sequence is DSGIRNGLDVVRMIALGADSVLLGR.

The protein belongs to the FMN-dependent alpha-hydroxy acid dehydrogenase family. The cofactor is FMN.

It localises to the cell inner membrane. The enzyme catalyses (S)-lactate + A = pyruvate + AH2. Functionally, catalyzes the conversion of L-lactate to pyruvate. Is coupled to the respiratory chain. The sequence is that of L-lactate dehydrogenase from Klebsiella pneumoniae subsp. pneumoniae (strain ATCC 700721 / MGH 78578).